The sequence spans 360 residues: 1-aminocyclopropane-1-carboxylate oxidase homolog 6 (360 aa).

Residues 208–309 (KGLLLLCHYY…ISVASFFSTS (102 aa)) enclose the Fe2OG dioxygenase domain. H232, D234, and H288 together coordinate Fe cation. R299 serves as a coordination point for 2-oxoglutarate.

Belongs to the iron/ascorbate-dependent oxidoreductase family. Requires Fe(2+) as cofactor. In terms of tissue distribution, constitutively expressed in leaves and blades.

This Arabidopsis thaliana (Mouse-ear cress) protein is 1-aminocyclopropane-1-carboxylate oxidase homolog 6.